A 370-amino-acid chain; its full sequence is Holliday junction branch migration complex subunit RuvB 2 (370 aa).

Residues 1–54 (MAIISSRAAGAEDPGQRQQKSSARRRESKLAFARAEGLLQPQAHPSEAQEESLR) form a disordered region. Residues 13–214 (DPGQRQQKSS…FGQVQRLRFY (202 aa)) are large ATPase domain (RuvB-L). Residues Leu-53, Arg-54, Gly-95, Lys-98, Thr-99, Thr-100, 161–163 (EDF), Arg-204, Tyr-214, and Arg-251 contribute to the ATP site. Thr-99 is a Mg(2+) binding site. The interval 215-285 (EPHELAEIVL…VAAAALELFQ (71 aa)) is small ATPAse domain (RuvB-S). Positions 288–370 (PMGLDWTDRK…TAQSPLPVWS (83 aa)) are head domain (RuvB-H). Residues Arg-343 and Arg-348 each coordinate DNA.

The protein belongs to the RuvB family. As to quaternary structure, homohexamer. Forms an RuvA(8)-RuvB(12)-Holliday junction (HJ) complex. HJ DNA is sandwiched between 2 RuvA tetramers; dsDNA enters through RuvA and exits via RuvB. An RuvB hexamer assembles on each DNA strand where it exits the tetramer. Each RuvB hexamer is contacted by two RuvA subunits (via domain III) on 2 adjacent RuvB subunits; this complex drives branch migration. In the full resolvosome a probable DNA-RuvA(4)-RuvB(12)-RuvC(2) complex forms which resolves the HJ.

The protein resides in the cytoplasm. It carries out the reaction ATP + H2O = ADP + phosphate + H(+). The RuvA-RuvB-RuvC complex processes Holliday junction (HJ) DNA during genetic recombination and DNA repair, while the RuvA-RuvB complex plays an important role in the rescue of blocked DNA replication forks via replication fork reversal (RFR). RuvA specifically binds to HJ cruciform DNA, conferring on it an open structure. The RuvB hexamer acts as an ATP-dependent pump, pulling dsDNA into and through the RuvAB complex. RuvB forms 2 homohexamers on either side of HJ DNA bound by 1 or 2 RuvA tetramers; 4 subunits per hexamer contact DNA at a time. Coordinated motions by a converter formed by DNA-disengaged RuvB subunits stimulates ATP hydrolysis and nucleotide exchange. Immobilization of the converter enables RuvB to convert the ATP-contained energy into a lever motion, pulling 2 nucleotides of DNA out of the RuvA tetramer per ATP hydrolyzed, thus driving DNA branch migration. The RuvB motors rotate together with the DNA substrate, which together with the progressing nucleotide cycle form the mechanistic basis for DNA recombination by continuous HJ branch migration. Branch migration allows RuvC to scan DNA until it finds its consensus sequence, where it cleaves and resolves cruciform DNA. The protein is Holliday junction branch migration complex subunit RuvB 2 of Synechococcus sp. (strain JA-3-3Ab) (Cyanobacteria bacterium Yellowstone A-Prime).